The primary structure comprises 421 residues: Serine hydroxymethyltransferase (421 aa).

(6S)-5,6,7,8-tetrahydrofolate-binding positions include Leu123 and 127–129 (GHL). Lys232 bears the N6-(pyridoxal phosphate)lysine mark.

Belongs to the SHMT family. In terms of assembly, homodimer. Pyridoxal 5'-phosphate is required as a cofactor.

The protein resides in the cytoplasm. The catalysed reaction is (6R)-5,10-methylene-5,6,7,8-tetrahydrofolate + glycine + H2O = (6S)-5,6,7,8-tetrahydrofolate + L-serine. Its pathway is one-carbon metabolism; tetrahydrofolate interconversion. It functions in the pathway amino-acid biosynthesis; glycine biosynthesis; glycine from L-serine: step 1/1. Its function is as follows. Catalyzes the reversible interconversion of serine and glycine with tetrahydrofolate (THF) serving as the one-carbon carrier. This reaction serves as the major source of one-carbon groups required for the biosynthesis of purines, thymidylate, methionine, and other important biomolecules. Also exhibits THF-independent aldolase activity toward beta-hydroxyamino acids, producing glycine and aldehydes, via a retro-aldol mechanism. The protein is Serine hydroxymethyltransferase of Ehrlichia canis (strain Jake).